Here is a 593-residue protein sequence, read N- to C-terminus: Copine-5 (593 aa).

The 133-residue stretch at 2 to 134 (EQPEDMASLS…SPGSRLEKPL (133 aa)) folds into the C2 1 domain. Ser-19 carries the phosphoserine modification. Ca(2+) is bound by residues Asp-38, Asp-44, Asp-98, Asp-100, Ser-103, Lys-108, and Asp-110. A Phosphoserine modification is found at Ser-103. Residue Ser-140 is modified to Phosphoserine. The region spanning 161-284 (KCGTIILSAE…ARGQSQFNIY (124 aa)) is the C2 2 domain. Asp-192, Asp-198, Asp-254, Asp-256, and Asp-262 together coordinate Ca(2+). The VWFA domain maps to 328–554 (NFTVAIDFTA…DVLAEIPDQL (227 aa)). Residues 562 to 593 (GIRPRPPPAAPTHSPSQSPARTPPASPLHTHI) are disordered. The span at 572 to 581 (PTHSPSQSPA) shows a compositional bias: low complexity.

Belongs to the copine family. Ca(2+) is required as a cofactor. In terms of tissue distribution, expressed in the brain, heart, stomach, spleen, lymph node and testis. Expressed in melanocytes.

It localises to the perikaryon. It is found in the cell projection. Probable calcium-dependent phospholipid-binding protein that may play a role in calcium-mediated intracellular processes. Plays a role in dendrite formation by melanocytes. The protein is Copine-5 of Homo sapiens (Human).